The sequence spans 274 residues: Putative septum site-determining protein MinD (274 aa).

22–29 (KGGVGKTT) is a binding site for ATP.

This sequence belongs to the ParA family. MinD subfamily.

The protein resides in the plastid. The protein localises to the chloroplast. Functionally, ATPase required for the correct placement of the division site. This is Putative septum site-determining protein MinD (minD-A) from Nephroselmis olivacea (Green alga).